Reading from the N-terminus, the 247-residue chain is Carboxy-S-adenosyl-L-methionine synthase (247 aa).

S-adenosyl-L-methionine contacts are provided by residues tyrosine 38, glycine 63–serine 65, asparagine 131, and arginine 198.

Belongs to the class I-like SAM-binding methyltransferase superfamily. Cx-SAM synthase family. As to quaternary structure, homodimer.

It carries out the reaction prephenate + S-adenosyl-L-methionine = carboxy-S-adenosyl-L-methionine + 3-phenylpyruvate + H2O. Catalyzes the conversion of S-adenosyl-L-methionine (SAM) to carboxy-S-adenosyl-L-methionine (Cx-SAM). The chain is Carboxy-S-adenosyl-L-methionine synthase from Desulforapulum autotrophicum (strain ATCC 43914 / DSM 3382 / VKM B-1955 / HRM2) (Desulfobacterium autotrophicum).